The chain runs to 215 residues: Orotate phosphoribosyltransferase (215 aa).

A 5-phospho-alpha-D-ribose 1-diphosphate-binding site is contributed by K25. Position 33–34 (33–34) interacts with orotate; that stretch reads FF. 5-phospho-alpha-D-ribose 1-diphosphate is bound by residues 71-72, R98, K99, K102, H104, and 124-132; these read YK and DDVITAGTA. The orotate site is built by T128 and R156.

It belongs to the purine/pyrimidine phosphoribosyltransferase family. PyrE subfamily. In terms of assembly, homodimer.

The enzyme catalyses orotidine 5'-phosphate + diphosphate = orotate + 5-phospho-alpha-D-ribose 1-diphosphate. The protein operates within pyrimidine metabolism; UMP biosynthesis via de novo pathway; UMP from orotate: step 1/2. Functionally, catalyzes the transfer of a ribosyl phosphate group from 5-phosphoribose 1-diphosphate to orotate, leading to the formation of orotidine monophosphate (OMP). The polypeptide is Orotate phosphoribosyltransferase (ura5) (Schizosaccharomyces pombe (strain 972 / ATCC 24843) (Fission yeast)).